Reading from the N-terminus, the 346-residue chain is Short-wave-sensitive opsin 1 (346 aa).

The Extracellular segment spans residues 1 to 31 (MSGEDEFYLFQNISSVGPWDGPQYHIAPVWA). N-linked (GlcNAc...) asparagine glycosylation occurs at asparagine 12. The chain crosses the membrane as a helical span at residues 32–56 (FHLQAAFMGFVFFAGTPLNATVLVA). Residues 57–68 (TLHYKKLRQPLN) lie on the Cytoplasmic side of the membrane. The chain crosses the membrane as a helical span at residues 69–94 (YILVNVSLGGFLFCIFSVFTVFIASC). The Extracellular portion of the chain corresponds to 95–108 (HGYFLFGRHVCALE). Residues cysteine 105 and cysteine 182 are joined by a disulfide bond. The helical transmembrane segment at 109–128 (AFLGSVAGLVTGWSLAFLAF) threads the bilayer. Topologically, residues 129–147 (ERYLVICKPFGNIRFNSKH) are cytoplasmic. The helical transmembrane segment at 148–171 (ALTVVLITWTIGIGVSIPPFFGWS) threads the bilayer. At 172-197 (RFIPEGLQCSCGPDWYTVGTKYRSEH) the chain is on the extracellular side. A helical membrane pass occupies residues 198-225 (YTWFLFIFCFIIPLSLICFSYFQLLRTL). The Cytoplasmic portion of the chain corresponds to 226 to 247 (RAVAAQQQESATTQKAEREVSH). Residues 248–271 (MVVVMVGSFCLCYVPYAALAMYMV) traverse the membrane as a helical segment. The Extracellular segment spans residues 272-279 (NNRNHGLY). Residues 280–304 (LRLVTIPAFFSKSSCVYNPIIYCFM) form a helical membrane-spanning segment. Position 291 is an N6-(retinylidene)lysine (lysine 291). Residues 305 to 346 (NKQFRACILEMVCRKPMTDESDMSGSQKTEVSTVSSSKVGPH) lie on the Cytoplasmic side of the membrane. A disordered region spans residues 322–346 (TDESDMSGSQKTEVSTVSSSKVGPH). Residues 330–346 (SQKTEVSTVSSSKVGPH) show a composition bias toward low complexity.

It belongs to the G-protein coupled receptor 1 family. Opsin subfamily. Post-translationally, phosphorylated on some or all of the serine and threonine residues present in the C-terminal region. As to expression, expressed in cone photoreceptor cells.

The protein resides in the cell membrane. Its subcellular location is the photoreceptor inner segment. The protein localises to the cell projection. It localises to the cilium. It is found in the photoreceptor outer segment. The protein resides in the cytoplasm. Its subcellular location is the perinuclear region. Visual pigments are the light-absorbing molecules that mediate vision. They consist of an apoprotein, opsin, covalently linked to cis-retinal. Required for the maintenance of cone outer segment organization in the ventral retina, but not essential for the maintenance of functioning cone photoreceptors. Involved in ensuring correct abundance and localization of retinal membrane proteins. May increase spectral sensitivity in dim light. The protein is Short-wave-sensitive opsin 1 (Opn1sw) of Rattus norvegicus (Rat).